A 453-amino-acid chain; its full sequence is GTPase Der (453 aa).

2 EngA-type G domains span residues 4-169 (PIVA…PTQG) and 177-352 (TKIA…NEYQ). GTP-binding positions include 10–17 (GRPNVGKS), 57–61 (DTGGL), 120–123 (NKCE), 183–190 (GRPNVGKS), 230–234 (DTAGI), and 295–298 (NKWD). Residues 353–438 (RRVTTSVINE…PIRLLWRGKK (86 aa)) enclose the KH-like domain.

Belongs to the TRAFAC class TrmE-Era-EngA-EngB-Septin-like GTPase superfamily. EngA (Der) GTPase family. In terms of assembly, associates with the 50S ribosomal subunit.

Functionally, GTPase that plays an essential role in the late steps of ribosome biogenesis. This Trichodesmium erythraeum (strain IMS101) protein is GTPase Der.